The following is a 185-amino-acid chain: Pycsar effector protein EcPycTM (185 aa).

3 consecutive transmembrane segments (helical) span residues 32–52 (ALLL…VGYF), 63–83 (MVIF…SVLL), and 141–161 (FILS…VSWI).

The protein resides in the cell inner membrane. In terms of biological role, pycsar (pyrimidine cyclase system for antiphage resistance) provides immunity against bacteriophage. The pyrimidine cyclase (PycC) synthesizes cyclic nucleotides in response to infection; these serve as specific second messenger signals. The signals activate the adjacent effector, leading to bacterial cell death and abortive phage infection. A clade E Pycsar system. Functionally, the effector component of a two-gene Pycsar system. Expression of this and adjacent cytidylate cyclase EcPycC (AC P0DV24) confers resistance to bacteriophage P1 and T5; this protein is required for resistance. When cells expressing the Pycsar system are infected by phage T5 at low multiplicity of infection (0.2 MOI) the culture survives, at 2.0 MOI bacteria enter growth arrest. The same cells enter growth arrest after exposure to 250 uM cCMP but not cUMP; this effector protein responds only to cCMP, usually produced by its cognate NTP cyclase. Some of the cells treated with cCMP have abnormal membrane protrusions, probably due to effects on membrane integrity. This is Pycsar effector protein EcPycTM from Escherichia coli.